Reading from the N-terminus, the 430-residue chain is Aspartate aminotransferase, mitochondrial (430 aa).

A mitochondrion-targeting transit peptide spans 1–29 (MALLHSGRVLPGIAAAFHPGLAAAASARA). Position 48 is a phosphothreonine (Thr-48). Lys-59 carries the N6-acetyllysine modification. Gly-65 is a binding site for substrate. Lys-73 carries the N6-acetyllysine; alternate modification. Lys-73 is subject to N6-succinyllysine; alternate. Lys-82 bears the N6-acetyllysine mark. Lys-90 is subject to N6-acetyllysine; alternate. Lys-90 is modified (N6-succinyllysine; alternate). The residue at position 96 (Tyr-96) is a 3'-nitrotyrosine; alternate. Position 96 is a phosphotyrosine; alternate (Tyr-96). N6-acetyllysine; alternate is present on residues Lys-107 and Lys-122. An N6-succinyllysine; alternate mark is found at Lys-107 and Lys-122. At Ser-143 the chain carries Phosphoserine. Lys-159 carries the post-translational modification N6-acetyllysine; alternate. Residue Lys-159 is modified to N6-succinyllysine; alternate. Substrate is bound at residue Trp-162. N6-acetyllysine; alternate is present on Lys-185. Position 185 is an N6-succinyllysine; alternate (Lys-185). Substrate is bound at residue Asn-215. Lys-227 carries the post-translational modification N6-succinyllysine. N6-acetyllysine is present on Lys-234. 2 positions are modified to N6-acetyllysine; alternate: Lys-279 and Lys-296. Lys-279 is modified (N6-(pyridoxal phosphate)lysine; alternate). The residue at position 296 (Lys-296) is an N6-succinyllysine; alternate. Residue Lys-302 is modified to N6-acetyllysine. At Lys-309 the chain carries N6-acetyllysine; alternate. Lys-309 is subject to N6-succinyllysine; alternate. Arg-313 carries the asymmetric dimethylarginine modification. Thr-333 carries the phosphothreonine modification. Lys-338 carries the N6-acetyllysine; alternate modification. Position 338 is an N6-succinyllysine; alternate (Lys-338). Residue Lys-345 is modified to N6-acetyllysine. An N6-acetyllysine; alternate modification is found at Lys-363. Lys-363 bears the N6-succinyllysine; alternate mark. Lys-364 and Lys-387 each carry N6-acetyllysine. 2 positions are modified to N6-acetyllysine; alternate: Lys-396 and Lys-404. N6-succinyllysine; alternate occurs at positions 396 and 404. Arg-407 provides a ligand contact to substrate.

This sequence belongs to the class-I pyridoxal-phosphate-dependent aminotransferase family. In terms of assembly, homodimer. It depends on pyridoxal 5'-phosphate as a cofactor.

It is found in the mitochondrion matrix. The protein resides in the cell membrane. The catalysed reaction is L-aspartate + 2-oxoglutarate = oxaloacetate + L-glutamate. It catalyses the reaction L-kynurenine + 2-oxoglutarate = kynurenate + L-glutamate + H2O. Functionally, catalyzes the irreversible transamination of the L-tryptophan metabolite L-kynurenine to form kynurenic acid (KA). As a member of the malate-aspartate shuttle, it has a key role in the intracellular NAD(H) redox balance. Is important for metabolite exchange between mitochondria and cytosol, and for amino acid metabolism. Facilitates cellular uptake of long-chain free fatty acids. This chain is Aspartate aminotransferase, mitochondrial, found in Homo sapiens (Human).